A 144-amino-acid chain; its full sequence is Large ribosomal subunit protein uL11 (144 aa).

This sequence belongs to the universal ribosomal protein uL11 family. Part of the ribosomal stalk of the 50S ribosomal subunit. Interacts with L10 and the large rRNA to form the base of the stalk. L10 forms an elongated spine to which L12 dimers bind in a sequential fashion forming a multimeric L10(L12)X complex. One or more lysine residues are methylated.

Forms part of the ribosomal stalk which helps the ribosome interact with GTP-bound translation factors. In Corynebacterium efficiens (strain DSM 44549 / YS-314 / AJ 12310 / JCM 11189 / NBRC 100395), this protein is Large ribosomal subunit protein uL11.